The primary structure comprises 274 residues: uncharacterized protein (274 aa).

The signal sequence occupies residues 1–30; that stretch reads MTIDTPAREDQTLAATHRAMWALGDYALMA.

The protein to M.tuberculosis Rv1403c.

This is an uncharacterized protein from Mycobacterium bovis (strain ATCC BAA-935 / AF2122/97).